The sequence spans 58 residues: Large ribosomal subunit protein uL30 (58 aa).

The protein belongs to the universal ribosomal protein uL30 family. As to quaternary structure, part of the 50S ribosomal subunit.

This is Large ribosomal subunit protein uL30 from Pseudomonas putida (strain ATCC 700007 / DSM 6899 / JCM 31910 / BCRC 17059 / LMG 24140 / F1).